We begin with the raw amino-acid sequence, 432 residues long: Non-peptidase homolog YmxG (432 aa).

The signal sequence occupies residues 1-20 (MKKFLITLLLGVFMGLQASA).

Belongs to the peptidase M16 family.

Its subcellular location is the secreted. In terms of biological role, may contribute to the full activity of the protease PqqE. This chain is Non-peptidase homolog YmxG, found in Helicobacter pylori (strain ATCC 700392 / 26695) (Campylobacter pylori).